We begin with the raw amino-acid sequence, 280 residues long: Energy-coupling factor transporter ATP-binding protein EcfA1 (280 aa).

Positions 7 to 241 (IEVAHLKYEY…GQRLLDLGLD (235 aa)) constitute an ABC transporter domain. 41 to 48 (GHNGSGKS) contributes to the ATP binding site.

Belongs to the ABC transporter superfamily. Energy-coupling factor EcfA family. Forms a stable energy-coupling factor (ECF) transporter complex composed of 2 membrane-embedded substrate-binding proteins (S component), 2 ATP-binding proteins (A component) and 2 transmembrane proteins (T component).

It localises to the cell membrane. Functionally, ATP-binding (A) component of a common energy-coupling factor (ECF) ABC-transporter complex. Unlike classic ABC transporters this ECF transporter provides the energy necessary to transport a number of different substrates. In Latilactobacillus sakei subsp. sakei (strain 23K) (Lactobacillus sakei subsp. sakei), this protein is Energy-coupling factor transporter ATP-binding protein EcfA1.